Reading from the N-terminus, the 301-residue chain is GTPase Era (301 aa).

Residues 8 to 174 (KSGFVALVGR…LKTLKDYLPE (167 aa)) form the Era-type G domain. Positions 16–23 (GRPNVGKS) are G1. Residue 16–23 (GRPNVGKS) coordinates GTP. The interval 42 to 46 (QTTRN) is G2. The interval 63 to 66 (DTPG) is G3. GTP is bound by residues 63-67 (DTPGI) and 124-127 (NKID). The interval 124 to 127 (NKID) is G4. The interval 153–155 (ISA) is G5. Positions 197 to 282 (IREQILRLTD…NLKLWVKVRR (86 aa)) constitute a KH type-2 domain.

The protein belongs to the TRAFAC class TrmE-Era-EngA-EngB-Septin-like GTPase superfamily. Era GTPase family. As to quaternary structure, monomer.

It is found in the cytoplasm. The protein localises to the cell membrane. An essential GTPase that binds both GDP and GTP, with rapid nucleotide exchange. Plays a role in 16S rRNA processing and 30S ribosomal subunit biogenesis and possibly also in cell cycle regulation and energy metabolism. The polypeptide is GTPase Era (Lactobacillus delbrueckii subsp. bulgaricus (strain ATCC 11842 / DSM 20081 / BCRC 10696 / JCM 1002 / NBRC 13953 / NCIMB 11778 / NCTC 12712 / WDCM 00102 / Lb 14)).